We begin with the raw amino-acid sequence, 159 residues long: Putative 4-hydroxy-4-methyl-2-oxoglutarate aldolase (159 aa).

Substrate-binding positions include 78-81 (GDVI) and Arg100. Asp101 lines the a divalent metal cation pocket.

It belongs to the class II aldolase/RraA-like family. In terms of assembly, homotrimer. Requires a divalent metal cation as cofactor.

It carries out the reaction 4-hydroxy-4-methyl-2-oxoglutarate = 2 pyruvate. The catalysed reaction is oxaloacetate + H(+) = pyruvate + CO2. Catalyzes the aldol cleavage of 4-hydroxy-4-methyl-2-oxoglutarate (HMG) into 2 molecules of pyruvate. Also contains a secondary oxaloacetate (OAA) decarboxylase activity due to the common pyruvate enolate transition state formed following C-C bond cleavage in the retro-aldol and decarboxylation reactions. This Mycobacterium sp. (strain KMS) protein is Putative 4-hydroxy-4-methyl-2-oxoglutarate aldolase.